Consider the following 274-residue polypeptide: tRNA-cytidine(32) 2-sulfurtransferase (274 aa).

The PP-loop motif motif lies at 40-45; it reads SGGKDS. [4Fe-4S] cluster-binding residues include cysteine 115, cysteine 118, and cysteine 206.

The protein belongs to the TtcA family. In terms of assembly, homodimer. The cofactor is Mg(2+). [4Fe-4S] cluster serves as cofactor.

The protein resides in the cytoplasm. It carries out the reaction cytidine(32) in tRNA + S-sulfanyl-L-cysteinyl-[cysteine desulfurase] + AH2 + ATP = 2-thiocytidine(32) in tRNA + L-cysteinyl-[cysteine desulfurase] + A + AMP + diphosphate + H(+). Its pathway is tRNA modification. In terms of biological role, catalyzes the ATP-dependent 2-thiolation of cytidine in position 32 of tRNA, to form 2-thiocytidine (s(2)C32). The sulfur atoms are provided by the cysteine/cysteine desulfurase (IscS) system. This is tRNA-cytidine(32) 2-sulfurtransferase from Pseudomonas putida (strain ATCC 700007 / DSM 6899 / JCM 31910 / BCRC 17059 / LMG 24140 / F1).